The following is a 568-amino-acid chain: Nitrite reductase (568 aa).

The first 25 residues, 1–25, serve as a signal peptide directing secretion; that stretch reads MPFGKPLVGTLLASLTLLGLATAHA. An N-terminal tail region spans residues 26 to 54; that stretch reads KDDMKAAEQYQGAASAVDPAHVVRTNGAP. The 86-residue stretch at 55–140 folds into the Cytochrome c domain; that stretch reads DMSESEFNEA…AKYIQHTPPQ (86 aa). Cysteine 72, cysteine 75, histidine 76, arginine 96, threonine 109, and methionine 113 together coordinate heme c. Positions 141-568 are D1-heme domain; sequence PPEWGMPEMR…NVYNTQHDVY (428 aa). Histidine 207, arginine 250, serine 251, tyrosine 270, arginine 397, and glutamine 508 together coordinate heme d1.

Homodimer. Heme c is required as a cofactor. Requires heme as cofactor.

The protein resides in the periplasm. The catalysed reaction is nitric oxide + Fe(III)-[cytochrome c] + H2O = Fe(II)-[cytochrome c] + nitrite + 2 H(+). It carries out the reaction A + NH4(+) + H2O = hydroxylamine + AH2 + H(+). The sequence is that of Nitrite reductase (nirS) from Pseudomonas aeruginosa (strain ATCC 15692 / DSM 22644 / CIP 104116 / JCM 14847 / LMG 12228 / 1C / PRS 101 / PAO1).